The following is a 303-amino-acid chain: Protoheme IX farnesyltransferase 2 (303 aa).

The next 9 helical transmembrane spans lie at 29–49 (VVAL…PGIV), 51–71 (LQPL…AAAF), 96–118 (ISTT…VLYT), 123–143 (LTAW…TAYL), 150–170 (NIVI…TAIT), 177–197 (ALLL…ALAI), 223–243 (CILL…LVGM), 244–264 (CGPI…YKAW), and 281–301 (FSIY…YFWV).

This sequence belongs to the UbiA prenyltransferase family. Protoheme IX farnesyltransferase subfamily.

It localises to the cell inner membrane. It carries out the reaction heme b + (2E,6E)-farnesyl diphosphate + H2O = Fe(II)-heme o + diphosphate. The protein operates within porphyrin-containing compound metabolism; heme O biosynthesis; heme O from protoheme: step 1/1. Functionally, converts heme B (protoheme IX) to heme O by substitution of the vinyl group on carbon 2 of heme B porphyrin ring with a hydroxyethyl farnesyl side group. The chain is Protoheme IX farnesyltransferase 2 from Shewanella frigidimarina (strain NCIMB 400).